Reading from the N-terminus, the 346-residue chain is MALDRYAALHVSTPQGRGDGRPTADQVLRDQDPLGSHWSDKVILITGGTAGLGAESARVLHKTGAKIFIMGRDIAKGEKVAADISASNPDYPPIEVIQMDQSRLESVREGAVEFLKRSGGKLNVLMANAGIVASPVKETQDGFEAVFAINYLSTFLLVQLLAPALVASTTPEYNSRLVVVSSAGHRASNIDPDKYNLVGEGYDPSKAYARSKTASILMANEFERRYGDRGVHALSLNPGIIMDTEISRGLPGTSASRREQYYKMEPLLAQYEKDVMQGAATQVWATVAKELEGKGGLYLDDVQVAREATHEGQFCRPGWKPWIWNEDNAVRLWKDSLNMVGLESEN.

The disordered stretch occupies residues 11 to 33; that stretch reads VSTPQGRGDGRPTADQVLRDQDP. The span at 18 to 32 shows a compositional bias: basic and acidic residues; sequence GDGRPTADQVLRDQD. NADP(+) is bound by residues Leu52, Lys76, Asp100, and Asn128. The Proton donor role is filled by Ser181. The NADP(+) site is built by Tyr208, Lys212, and Ile241. Residue Tyr208 is the Proton acceptor of the active site. Lys212 functions as the Lowers pKa of active site Tyr in the catalytic mechanism.

It belongs to the short-chain dehydrogenases/reductases (SDR) family.

It participates in secondary metabolite biosynthesis. In terms of biological role, oxidoreductase; part of the gene cluster that mediates the biosynthesis of calbistrin A and related compounds. Calbistrin A is a secondary metabolite with an interesting structure that was recently found to have bioactivity against leukemia cells. It consists of two polyketides linked by an ester bond: a bicyclic decalin containing polyketide and a linear 12 carbon dioic acid structure. The polyketide synthase calA is probably responsible for forming the decalin moiety. Because calA lacks a designated enoylreductase (ER) domain, the required activity is provided by the trans-enoyl reductase calK. Following release from the PKS, calF then probably catalyzes the oxidation and the subsequent Diels Alder cycloisomerization that lead to the formation of the decalin moiety. The decalin polyketide backbone includes two C-methyl groups, at C7 and C11 in backbone, of which the C7 position is probably methylated by the methyltransferase domain of calA. A candidate for adding the methyl group at C11, if not done by CalA, is the cluster methyltransferase calH. Several additional tailoring enzymes within the cluster could be involved in the modification of the decalin polyketide product. Those include the 3 cytochrome P450 monooxygenases CalE, CalG and CalL, of which one might be responsible for the introduction of the extra hydroxyl group attached to the backbone of the decalin moiety, at position C9 in the backbone, that allows for attachment of the linear moiety. One tailoring enzyme activity that is expected to be involved in biosynthesis of calbistrin is an acyltransferase for connecting the two polyketide synthase products, and which could be performed by the cluster acyltransferase calJ. The enzyme responsible for the biosynthesis of the linear moiety, probably a second PKS, has not been identified yet. The protein is Oxidoreductase calI of Penicillium decumbens.